The following is a 101-amino-acid chain: Urease subunit beta (101 aa).

Belongs to the urease beta subunit family. In terms of assembly, heterotrimer of UreA (gamma), UreB (beta) and UreC (alpha) subunits. Three heterotrimers associate to form the active enzyme.

Its subcellular location is the cytoplasm. The catalysed reaction is urea + 2 H2O + H(+) = hydrogencarbonate + 2 NH4(+). It functions in the pathway nitrogen metabolism; urea degradation; CO(2) and NH(3) from urea (urease route): step 1/1. In Pseudomonas fluorescens (strain SBW25), this protein is Urease subunit beta.